A 31-amino-acid chain; its full sequence is MSSVTLRNVSKAYGETIISKNINLEIQEGEF.

This sequence belongs to the ABC transporter superfamily. Maltooligosaccharide importer (TC 3.A.1.1.1) family. As to quaternary structure, the complex is composed of two ATP-binding proteins (MalK), two transmembrane proteins (MalG and MalK) and a solute-binding protein (MalE).

Its subcellular location is the cell inner membrane. It catalyses the reaction D-maltose(out) + ATP + H2O = D-maltose(in) + ADP + phosphate + H(+). Part of the ABC transporter complex MalEFGK involved in maltose/maltodextrin import. Responsible for energy coupling to the transport system. The polypeptide is Maltose/maltodextrin import ATP-binding protein MalK (Photorhabdus luminescens (Xenorhabdus luminescens)).